We begin with the raw amino-acid sequence, 349 residues long: Methionine import ATP-binding protein MetN (349 aa).

The ABC transporter domain maps to 5–245 (IDLKNITVQF…PQKQLTRQFV (241 aa)). Residue 37–44 (GFSGAGKS) participates in ATP binding.

This sequence belongs to the ABC transporter superfamily. Methionine importer (TC 3.A.1.24) family. As to quaternary structure, the complex is composed of two ATP-binding proteins (MetN), two transmembrane proteins (MetI) and a solute-binding protein (MetQ).

It localises to the cell membrane. It catalyses the reaction L-methionine(out) + ATP + H2O = L-methionine(in) + ADP + phosphate + H(+). It carries out the reaction D-methionine(out) + ATP + H2O = D-methionine(in) + ADP + phosphate + H(+). Functionally, part of the ABC transporter complex MetNIQ involved in methionine import. Responsible for energy coupling to the transport system. The chain is Methionine import ATP-binding protein MetN from Lactobacillus johnsonii (strain CNCM I-12250 / La1 / NCC 533).